Here is a 187-residue protein sequence, read N- to C-terminus: Hypoxanthine/guanine phosphoribosyltransferase (187 aa).

This sequence belongs to the purine/pyrimidine phosphoribosyltransferase family. Archaeal HPRT subfamily. In terms of assembly, homodimer.

It is found in the cytoplasm. The enzyme catalyses IMP + diphosphate = hypoxanthine + 5-phospho-alpha-D-ribose 1-diphosphate. The catalysed reaction is GMP + diphosphate = guanine + 5-phospho-alpha-D-ribose 1-diphosphate. Its pathway is purine metabolism; IMP biosynthesis via salvage pathway; IMP from hypoxanthine: step 1/1. Catalyzes a salvage reaction resulting in the formation of IMP that is energically less costly than de novo synthesis. This is Hypoxanthine/guanine phosphoribosyltransferase from Methanococcus voltae (strain ATCC BAA-1334 / A3).